Consider the following 130-residue polypeptide: Large ribosomal subunit protein bL20c (130 aa).

It belongs to the bacterial ribosomal protein bL20 family.

Its subcellular location is the plastid. It is found in the chloroplast. In terms of biological role, binds directly to 23S ribosomal RNA and is necessary for the in vitro assembly process of the 50S ribosomal subunit. It is not involved in the protein synthesizing functions of that subunit. This is Large ribosomal subunit protein bL20c (rpl20) from Glycine max (Soybean).